Consider the following 168-residue polypeptide: WAP four-disulfide core domain protein 2 (168 aa).

The first 30 residues, 1-30 (MPACRLCLLATGLLLGLLLFTPLSATGTRA), serve as a signal peptide directing secretion. WAP domains are found at residues 31-74 (EKPG…SKPN) and 119-167 (NGEK…TTPK). 4 cysteine pairs are disulfide-bonded: cysteine 36-cysteine 62, cysteine 45-cysteine 66, cysteine 49-cysteine 61, and cysteine 55-cysteine 70. The interval 100–123 (PLSRGQVSTKPPVVTKEGGNGEKQ) is disordered. 4 disulfides stabilise this stretch: cysteine 126–cysteine 154, cysteine 137–cysteine 158, cysteine 141–cysteine 153, and cysteine 147–cysteine 163.

In terms of assembly, homotrimer; disulfide-linked.

It is found in the secreted. Functionally, broad range protease inhibitor. The protein is WAP four-disulfide core domain protein 2 (Wfdc2) of Rattus norvegicus (Rat).